The primary structure comprises 139 residues: Putative pre-16S rRNA nuclease (139 aa).

This sequence belongs to the YqgF nuclease family.

The protein localises to the cytoplasm. Functionally, could be a nuclease involved in processing of the 5'-end of pre-16S rRNA. This Legionella pneumophila subsp. pneumophila (strain Philadelphia 1 / ATCC 33152 / DSM 7513) protein is Putative pre-16S rRNA nuclease.